Reading from the N-terminus, the 264-residue chain is 3-methyl-2-oxobutanoate hydroxymethyltransferase (264 aa).

Mg(2+) contacts are provided by aspartate 45 and aspartate 84. 3-methyl-2-oxobutanoate-binding positions include 45-46 (DS), aspartate 84, and lysine 112. A Mg(2+)-binding site is contributed by glutamate 114. The Proton acceptor role is filled by glutamate 181.

This sequence belongs to the PanB family. Homodecamer; pentamer of dimers. Mg(2+) is required as a cofactor.

It localises to the cytoplasm. The catalysed reaction is 3-methyl-2-oxobutanoate + (6R)-5,10-methylene-5,6,7,8-tetrahydrofolate + H2O = 2-dehydropantoate + (6S)-5,6,7,8-tetrahydrofolate. The protein operates within cofactor biosynthesis; (R)-pantothenate biosynthesis; (R)-pantoate from 3-methyl-2-oxobutanoate: step 1/2. Catalyzes the reversible reaction in which hydroxymethyl group from 5,10-methylenetetrahydrofolate is transferred onto alpha-ketoisovalerate to form ketopantoate. This is 3-methyl-2-oxobutanoate hydroxymethyltransferase from Shewanella pealeana (strain ATCC 700345 / ANG-SQ1).